Reading from the N-terminus, the 409-residue chain is Probable plastid-lipid-associated protein 12, chloroplastic (409 aa).

A chloroplast-targeting transit peptide spans 1-55 (MVAVRFYAVEMSLPCLCPCPSSPISLSLCSPRFNLLNTTSRRLGLSRNCRTLRIS).

Belongs to the PAP/fibrillin family.

The protein localises to the plastid. It localises to the chloroplast thylakoid. The sequence is that of Probable plastid-lipid-associated protein 12, chloroplastic (PAP12) from Arabidopsis thaliana (Mouse-ear cress).